The sequence spans 156 residues: Small ribosomal subunit protein uS7 (156 aa).

This sequence belongs to the universal ribosomal protein uS7 family. As to quaternary structure, part of the 30S ribosomal subunit. Contacts proteins S9 and S11.

Its function is as follows. One of the primary rRNA binding proteins, it binds directly to 16S rRNA where it nucleates assembly of the head domain of the 30S subunit. Is located at the subunit interface close to the decoding center, probably blocks exit of the E-site tRNA. This chain is Small ribosomal subunit protein uS7, found in Afipia carboxidovorans (strain ATCC 49405 / DSM 1227 / KCTC 32145 / OM5) (Oligotropha carboxidovorans).